The following is a 182-amino-acid chain: MWKLSRSRVLLDEPPEEEDVLRGASPASAAAQAPGASLRGWKEATSLFNKDDEERLLETSRSSKSKGTNVRLKEELKAEKKSGFWDALVLKQNVQPKKPDQMEGWEPPKLTAEDVATDHTEDGISSLPPWSAWEDDTKGSTKYTSLASSASSSRWSLRSAGKLVSIRRQSKGHLTETCEEVE.

2 disordered regions span residues 1-71 (MWKL…TNVR) and 117-152 (TDHT…SASS). A Phosphoserine modification is found at serine 7. Residues 22–37 (RGASPASAAAQAPGAS) show a composition bias toward low complexity. Positions 49-58 (NKDDEERLLE) are enriched in basic and acidic residues. Residues 59 to 68 (TSRSSKSKGT) show a composition bias toward polar residues.

Belongs to the TDRP family. As to quaternary structure, interacts with PRM2. Predominantly expressed in testis.

It is found in the nucleus. The protein resides in the cytoplasm. Contributes to normal sperm motility, but not essential for male fertility. This chain is Testis development-related protein (Tdrp), found in Rattus norvegicus (Rat).